Reading from the N-terminus, the 162-residue chain is NADH-ubiquinone oxidoreductase 24 kDa subunit homolog C11E3.12, mitochondrial (162 aa).

Positions 88, 93, 125, and 129 each coordinate [2Fe-2S] cluster.

The protein belongs to the complex I 24 kDa subunit family. Requires [2Fe-2S] cluster as cofactor.

The protein resides in the mitochondrion. The protein is NADH-ubiquinone oxidoreductase 24 kDa subunit homolog C11E3.12, mitochondrial of Schizosaccharomyces pombe (strain 972 / ATCC 24843) (Fission yeast).